The chain runs to 32 residues: Delta-conotoxin-like MVID (32 aa).

3 disulfide bridges follow: Cys3–Cys18, Cys10–Cys22, and Cys17–Cys27. Pro14 carries the 4-hydroxyproline modification.

Belongs to the conotoxin O1 superfamily. As to expression, expressed by the venom duct.

The protein localises to the secreted. Its function is as follows. Delta-conotoxins bind to site 6 of voltage-gated sodium channels (Nav) and inhibit the inactivation process. The polypeptide is Delta-conotoxin-like MVID (Conus magus (Magical cone)).